The sequence spans 377 residues: 23S rRNA (uracil(747)-C(5))-methyltransferase RlmC (377 aa).

Cys3, Cys11, Cys14, and Cys87 together coordinate [4Fe-4S] cluster. S-adenosyl-L-methionine is bound by residues Gln212, Phe241, Glu262, and Asn307. The active-site Nucleophile is the Cys334.

This sequence belongs to the class I-like SAM-binding methyltransferase superfamily. RNA M5U methyltransferase family. RlmC subfamily.

It catalyses the reaction uridine(747) in 23S rRNA + S-adenosyl-L-methionine = 5-methyluridine(747) in 23S rRNA + S-adenosyl-L-homocysteine + H(+). Its function is as follows. Catalyzes the formation of 5-methyl-uridine at position 747 (m5U747) in 23S rRNA. The polypeptide is 23S rRNA (uracil(747)-C(5))-methyltransferase RlmC (Xenorhabdus bovienii (strain SS-2004) (Xenorhabdus nematophila subsp. bovienii)).